Reading from the N-terminus, the 1479-residue chain is Protein CHROMATIN REMODELING 20 (1479 aa).

The stretch at 19–49 (EVIVESKEDEMDIIIEENREAEQEVMEVKAR) forms a coiled coil. Positions 40 to 55 (EQEVMEVKARDGRGEQ) are enriched in basic and acidic residues. Residues 40 to 109 (EQEVMEVKAR…DELDLEKPLS (70 aa)) are disordered. Positions 76–86 (DASSRSESSDF) are enriched in low complexity. The span at 94–109 (ILSRRDDELDLEKPLS) shows a compositional bias: basic and acidic residues. A coiled-coil region spans residues 109–199 (SEEEIDELIS…EQLDGAGIEL (91 aa)). The region spanning 472-601 (RDDSQNPANN…KKSIELSSDS (130 aa)) is the ADD domain. Residues 483 to 514 (RCTACNKVAVEVHSHPLLEVIVCMDCKRSIED) form a GATA-type; atypical zinc finger. Residues 524–577 (ERHCEWCGHIADLIDCRTCEKLFCASCIKRNIGEEYMSEAQSSGWDCCCCSPIP) form a PHD-type; atypical zinc finger. A coiled-coil region spans residues 578-598 (LQRLTLELEKAMRDKKSIELS). Positions 594–615 (SIELSSDSSSDSSSDNNSVDTD) are disordered. The segment covering 598 to 615 (SSDSSSDSSSDNNSVDTD) has biased composition (low complexity). In terms of domain architecture, Helicase ATP-binding spans 741 to 924 (VKSGDKGLGC…YCMVDFVREG (184 aa)). ATP is bound at residue 754–761 (HTMGLGKT). The short motif at 875–878 (DEAH) is the DEAH box element. Positions 1122–1290 (DILSMSADVG…QVHRTISKEE (169 aa)) constitute a Helicase C-terminal domain. Positions 1400 to 1423 (SESPVVPKPSPSTQTEPLPQPKGF) are disordered.

Belongs to the SNF2/RAD54 helicase family.

The protein resides in the nucleus. It localises to the chromosome. It is found in the telomere. Functionally, involved in transcriptional regulation and chromatin remodeling. Facilitates DNA replication in multiple cellular environments and is required for efficient replication of a subset of genomic loci. Binds to DNA tandem repeat sequences in both telomeres and euchromatin and in vitro binds DNA quadruplex structures. May help stabilizing G-rich regions into regular chromatin structures by remodeling G4 DNA and incorporating H3.3-containing nucleosomes. Involved in DNA repair of gamma-irradiation-mediated damages. The polypeptide is Protein CHROMATIN REMODELING 20 (Arabidopsis thaliana (Mouse-ear cress)).